Reading from the N-terminus, the 213-residue chain is Na(+)-translocating NADH-quinone reductase subunit D (213 aa).

The next 7 membrane-spanning stretches (helical) occupy residues 14–34 (ALWI…ALAV), 42–62 (LTMG…VSLL), 77–97 (IIIS…FFNI), 101–121 (LSVF…AESM), 131–151 (FLDG…ISII), 154–174 (LFGF…YASA), and 183–203 (LGLM…VWLV).

This sequence belongs to the NqrDE/RnfAE family. Composed of six subunits; NqrA, NqrB, NqrC, NqrD, NqrE and NqrF.

It is found in the cell inner membrane. It carries out the reaction a ubiquinone + n Na(+)(in) + NADH + H(+) = a ubiquinol + n Na(+)(out) + NAD(+). In terms of biological role, NQR complex catalyzes the reduction of ubiquinone-1 to ubiquinol by two successive reactions, coupled with the transport of Na(+) ions from the cytoplasm to the periplasm. NqrA to NqrE are probably involved in the second step, the conversion of ubisemiquinone to ubiquinol. The sequence is that of Na(+)-translocating NADH-quinone reductase subunit D from Chlamydia muridarum (strain MoPn / Nigg).